The chain runs to 510 residues: Probable inorganic carbon transporter subunit DabB (510 aa).

14 helical membrane passes run 9–29 (TLLT…LLFL), 37–57 (FVHI…LALV), 68–88 (WHLD…GLII), 105–122 (YFAL…AWLS), 125–145 (LRFM…LIGL), 158–178 (ISGY…IWLF), 204–224 (TGIN…WPFQ), 226–246 (WLIE…AGLV), 266–286 (QIIL…ISLV), 303–323 (GFML…HLIL), 355–375 (LWMI…WFIT), 382–402 (LVSA…LVVF), 410–430 (IAGL…HNSL), and 446–466 (APAV…CTFV).

This sequence belongs to the inorganic carbon transporter (TC 9.A.2) DabB family. In terms of assembly, forms a complex with DabA.

Its subcellular location is the cell membrane. In terms of biological role, part of an energy-coupled inorganic carbon pump. Expression of both dabA and dabB (DA2) restores growth in ambient air to E.coli deleted of its carbonic anhydrase genes (called CAfree, deletion of 'can' and 'cynT'). The protein is Probable inorganic carbon transporter subunit DabB of Bacillus anthracis.